A 364-amino-acid chain; its full sequence is MNPLLSFKDVSKGFEDVQILNEINIDIEPSYFYTLLGPSGCGKTTILKLIAGFEYPDSGDIIYKDKPIGKMPPNKRKVNTVFQDYALFPHLNVFDNIAYGLKLKKLSKSEIKRKVTEALQLVKLSGYEHRQIQGMSGGQKQRVAIARAIVNEPEILLLDESLSALDLKLRTEMQYLLRELQSRLGITFIFVTHDQEEALALSDYIFVMKDGKIQQFGTPIDIYDEPVNRFVADFIGESNIVHGTMVEDFVVNIYGQNFDCVDMGIKENKKVEVVIRPEDISLVSQNDGLFKAKVDSMLFRGVHYEICCKDRKGYEWVIQSTKKANVGSEVGLYFEPEAIHIMVPGETEEEFDKRIESYEDYHHA.

Residues 5-235 (LSFKDVSKGF…PVNRFVADFI (231 aa)) enclose the ABC transporter domain. 37 to 44 (GPSGCGKT) serves as a coordination point for ATP.

This sequence belongs to the ABC transporter superfamily. Spermidine/putrescine importer (TC 3.A.1.11.1) family. In terms of assembly, the complex is composed of two ATP-binding proteins (PotA), two transmembrane proteins (PotB and PotC) and a solute-binding protein (PotD).

Its subcellular location is the cell membrane. The enzyme catalyses ATP + H2O + polyamine-[polyamine-binding protein]Side 1 = ADP + phosphate + polyamineSide 2 + [polyamine-binding protein]Side 1.. Functionally, part of the ABC transporter complex PotABCD involved in spermidine/putrescine import. Responsible for energy coupling to the transport system. The sequence is that of Spermidine/putrescine import ATP-binding protein PotA from Staphylococcus epidermidis (strain ATCC 12228 / FDA PCI 1200).